Consider the following 283-residue polypeptide: MFS-type transporter eupM (283 aa).

The next 7 membrane-spanning stretches (helical) occupy residues 68–88 (LVAWLQVLGAWVLFFNTWGAM), 111–131 (IAWIGSIQTFCLQAMGLVAGP), 136–156 (GGFKILIVTGSVGVVSGYMML), 165–185 (VLLAQGFLIGIAEGCLFTPMI), 196–216 (IGLATGIASSGSSMGGVVYPI), 227–247 (FAWTTRVLGFISLGMLLIPII), and 263–283 (LIDLSVFTDWPFIVFVIATMI).

This sequence belongs to the major facilitator superfamily. Monocarboxylate porter (TC 2.A.1.13) family.

The protein localises to the membrane. In terms of biological role, MFS-type transporter; part of the gene cluster that mediates the biosynthesis of eupenifeldin, a bistropolone meroterpenoid that acts as an antitumor agent. This chain is MFS-type transporter eupM, found in Phoma sp.